The sequence spans 228 residues: Putative N-acetylmannosamine-6-phosphate 2-epimerase (228 aa).

This sequence belongs to the NanE family.

It carries out the reaction an N-acyl-D-glucosamine 6-phosphate = an N-acyl-D-mannosamine 6-phosphate. The protein operates within amino-sugar metabolism; N-acetylneuraminate degradation; D-fructose 6-phosphate from N-acetylneuraminate: step 3/5. Converts N-acetylmannosamine-6-phosphate (ManNAc-6-P) to N-acetylglucosamine-6-phosphate (GlcNAc-6-P). The protein is Putative N-acetylmannosamine-6-phosphate 2-epimerase of Pasteurella multocida (strain Pm70).